A 908-amino-acid polypeptide reads, in one-letter code: Isoleucine--tRNA ligase (908 aa).

The short motif at proline 59 to histidine 69 is the 'HIGH' region element. Position 554 (glutamate 554) interacts with L-isoleucyl-5'-AMP. A 'KMSKS' region motif is present at residues lysine 595–serine 599. Residue lysine 598 coordinates ATP. Positions 882, 885, 898, and 901 each coordinate Zn(2+).

Belongs to the class-I aminoacyl-tRNA synthetase family. IleS type 1 subfamily. In terms of assembly, monomer. Zn(2+) serves as cofactor.

It localises to the cytoplasm. It carries out the reaction tRNA(Ile) + L-isoleucine + ATP = L-isoleucyl-tRNA(Ile) + AMP + diphosphate. In terms of biological role, catalyzes the attachment of isoleucine to tRNA(Ile). As IleRS can inadvertently accommodate and process structurally similar amino acids such as valine, to avoid such errors it has two additional distinct tRNA(Ile)-dependent editing activities. One activity is designated as 'pretransfer' editing and involves the hydrolysis of activated Val-AMP. The other activity is designated 'posttransfer' editing and involves deacylation of mischarged Val-tRNA(Ile). This Mesoplasma florum (strain ATCC 33453 / NBRC 100688 / NCTC 11704 / L1) (Acholeplasma florum) protein is Isoleucine--tRNA ligase.